The chain runs to 146 residues: Hemoglobin subunit beta (146 aa).

Residue V1 is modified to N-acetylvaline. Positions 2-146 (HLTAEEKAAV…VANALAHKYH (145 aa)) constitute a Globin domain. The residue at position 12 (T12) is a Phosphothreonine. A Phosphoserine modification is found at S44. At K59 the chain carries N6-acetyllysine. Position 63 (H63) interacts with heme b. K82 carries the post-translational modification N6-acetyllysine. A heme b-binding site is contributed by H92. Position 93 is an S-nitrosocysteine (C93). The residue at position 144 (K144) is an N6-acetyllysine.

This sequence belongs to the globin family. As to quaternary structure, heterotetramer of two alpha chains and two beta chains. In terms of tissue distribution, red blood cells.

In terms of biological role, involved in oxygen transport from the lung to the various peripheral tissues. In Mellivora capensis (Ratel), this protein is Hemoglobin subunit beta (HBB).